The chain runs to 80 residues: MISPQDLEGMSFEQALARLEQIVGELESGKAELERSIEIYEDGAALKAHCEKKLEAARLKVEKIVLGQGGAVSAEAAEFN.

This sequence belongs to the XseB family. As to quaternary structure, heterooligomer composed of large and small subunits.

The protein resides in the cytoplasm. It catalyses the reaction Exonucleolytic cleavage in either 5'- to 3'- or 3'- to 5'-direction to yield nucleoside 5'-phosphates.. Its function is as follows. Bidirectionally degrades single-stranded DNA into large acid-insoluble oligonucleotides, which are then degraded further into small acid-soluble oligonucleotides. This is Exodeoxyribonuclease 7 small subunit from Caulobacter sp. (strain K31).